The chain runs to 376 residues: Arf-GAP with dual PH domain-containing protein 2 (376 aa).

Residues 9–130 (KRLLELLQAA…EFMAEKAVSP (122 aa)) form the Arf-GAP domain. The segment at 25 to 48 (CADCGAADPDWASYKLGVFICLHC) adopts a C4-type zinc-finger fold. PH domains are found at residues 131-232 (PGDR…AARL) and 254-360 (NYLK…GVLS).

As to expression, expressed in many tissues, with highest levels in fat, heart and skeletal muscle. Also detected in kidney, liver and lung.

It localises to the cytoplasm. The protein localises to the cell membrane. GTPase-activating protein for the ADP ribosylation factor family (Potential). Binds phosphatidylinositol 4,5-bisphosphate, phosphatidylinositol 3,4,5-trisphosphate (PtdInsP3) and inositol 1,3,4,5-tetrakisphosphate (InsP4). Binding of phosphatidylinositol 3,5-bisphosphate and phosphatidylinositol 3,4-bisphosphate occurs at a much lower affinity. Possesses a stoichiometry of two binding sites for InsP4 with identical affinity. The protein is Arf-GAP with dual PH domain-containing protein 2 (Adap2) of Rattus norvegicus (Rat).